Here is a 574-residue protein sequence, read N- to C-terminus: Type II methyltransferase M.PaeR7I (574 aa).

Belongs to the N(4)/N(6)-methyltransferase family. As to quaternary structure, monomer.

It catalyses the reaction a 2'-deoxyadenosine in DNA + S-adenosyl-L-methionine = an N(6)-methyl-2'-deoxyadenosine in DNA + S-adenosyl-L-homocysteine + H(+). Its function is as follows. A gamma subtype methylase, recognizes the double-stranded sequence 5'-CTCGAG-3', methylates A-5 on both strands, and protects the DNA from cleavage by the PaeR7I endonuclease. The sequence is that of Type II methyltransferase M.PaeR7I (paeR7IM) from Pseudomonas aeruginosa.